We begin with the raw amino-acid sequence, 876 residues long: Translation initiation factor IF-2 (876 aa).

The tr-type G domain maps to 378–547; that stretch reads TRPPIITIMG…LTQSEMLELK (170 aa). The G1 stretch occupies residues 387 to 394; it reads GHVDHGKT. 387–394 contacts GTP; sequence GHVDHGKT. Residues 412–416 are G2; the sequence is RITQH. Positions 433–436 are G3; the sequence is DTPG. GTP contacts are provided by residues 433-437 and 487-490; these read DTPGH and NKID. The G4 stretch occupies residues 487–490; that stretch reads NKID. A G5 region spans residues 523 to 525; that stretch reads SAK.

It belongs to the TRAFAC class translation factor GTPase superfamily. Classic translation factor GTPase family. IF-2 subfamily.

It localises to the cytoplasm. In terms of biological role, one of the essential components for the initiation of protein synthesis. Protects formylmethionyl-tRNA from spontaneous hydrolysis and promotes its binding to the 30S ribosomal subunits. Also involved in the hydrolysis of GTP during the formation of the 70S ribosomal complex. The sequence is that of Translation initiation factor IF-2 from Buchnera aphidicola subsp. Baizongia pistaciae (strain Bp).